The sequence spans 232 residues: 7-cyano-7-deazaguanine synthase (232 aa).

8–18 (FSGGQDSTTCL) lines the ATP pocket. Residues Cys-187, Cys-196, Cys-199, and Cys-202 each coordinate Zn(2+).

This sequence belongs to the QueC family. Zn(2+) serves as cofactor.

The enzyme catalyses 7-carboxy-7-deazaguanine + NH4(+) + ATP = 7-cyano-7-deazaguanine + ADP + phosphate + H2O + H(+). It participates in purine metabolism; 7-cyano-7-deazaguanine biosynthesis. In terms of biological role, catalyzes the ATP-dependent conversion of 7-carboxy-7-deazaguanine (CDG) to 7-cyano-7-deazaguanine (preQ(0)). The polypeptide is 7-cyano-7-deazaguanine synthase (Vibrio campbellii (strain ATCC BAA-1116)).